The following is a 1002-amino-acid chain: Protein SMAX1-LIKE 7 (1002 aa).

Positions 8–185 (ARQCLTEETA…DVLHPPVTSQ (178 aa)) constitute a Clp R domain. 2 repeat regions span residues 12–86 (LTEE…LDRL) and 103–185 (VSNS…VTSQ). The short motif at 854–858 (LDLNL) is the EAR element.

Belongs to the ClpA/ClpB family. Interacts with TPL/TPR in an EAR-motif dependent manner. Interacts with TPL, TPR1, TPR2 and TPR4. Interacts with MAX2 and TPR2. Interacts with D14. The interaction with D14 occurs in the presence of (2'R) stereoisomers of strigolactones, but not (2'S) stereoisomers. In terms of processing, ubiquitinated upon strigolactone treatment. Strigolactone, but not karrikin, triggers rapid SCF(MAX2)-dependent degradation. Expressed in axillary branches and roots. Detected in seedlings and leaves. Expressed in the primary rosette buds and expanding leaves of adult rosettes, the vasculature of the hypocotyls, cotyledons, and mature roots, and in the midvein and petioles of young leaves.

Its subcellular location is the nucleus. Functionally, probable component of a transcriptional corepressor complex involved in branching control. Regulates cotyledon expansion and lateral root growth, but not germination or hypocotyl elongation. Promotes auxin transport and PIN1 accumulation in the stem and represses BRC1/TCP18 expression in axillary buds. The sequence is that of Protein SMAX1-LIKE 7 from Arabidopsis thaliana (Mouse-ear cress).